The sequence spans 314 residues: 2,3-dihydroxyphenylpropionate/2,3-dihydroxicinnamic acid 1,2-dioxygenase (314 aa).

The active-site Proton donor is the histidine 115. Catalysis depends on histidine 179, which acts as the Proton acceptor.

Belongs to the LigB/MhpB extradiol dioxygenase family. In terms of assembly, homotetramer. Fe(2+) is required as a cofactor.

The catalysed reaction is 3-(2,3-dihydroxyphenyl)propanoate + O2 = (2Z,4E)-2-hydroxy-6-oxonona-2,4-dienedioate + H(+). It carries out the reaction (2E)-3-(2,3-dihydroxyphenyl)prop-2-enoate + O2 = (2Z,4E,7E)-2-hydroxy-6-oxonona-2,4,7-trienedioate + H(+). Its pathway is aromatic compound metabolism; 3-phenylpropanoate degradation. Functionally, catalyzes the non-heme iron(II)-dependent oxidative cleavage of 2,3-dihydroxyphenylpropionic acid and 2,3-dihydroxicinnamic acid into 2-hydroxy-6-ketononadienedioate and 2-hydroxy-6-ketononatrienedioate, respectively. This chain is 2,3-dihydroxyphenylpropionate/2,3-dihydroxicinnamic acid 1,2-dioxygenase, found in Cupriavidus pinatubonensis (strain JMP 134 / LMG 1197) (Cupriavidus necator (strain JMP 134)).